The chain runs to 862 residues: Protein translocase subunit SecA (862 aa).

ATP contacts are provided by residues Q88, 106 to 110, and D506; that span reads GEGKT. 4 residues coordinate Zn(2+): C839, C841, C850, and H851.

This sequence belongs to the SecA family. In terms of assembly, monomer and homodimer. Part of the essential Sec protein translocation apparatus which comprises SecA, SecYEG and auxiliary proteins SecDF-YajC and YidC. It depends on Zn(2+) as a cofactor.

The protein localises to the cell inner membrane. Its subcellular location is the cytoplasm. It catalyses the reaction ATP + H2O + cellular proteinSide 1 = ADP + phosphate + cellular proteinSide 2.. Its function is as follows. Part of the Sec protein translocase complex. Interacts with the SecYEG preprotein conducting channel. Has a central role in coupling the hydrolysis of ATP to the transfer of proteins into and across the cell membrane, serving as an ATP-driven molecular motor driving the stepwise translocation of polypeptide chains across the membrane. The polypeptide is Protein translocase subunit SecA (Campylobacter jejuni (strain RM1221)).